The chain runs to 70 residues: Mu-conotoxin-like Am3.4 (70 aa).

Positions 1-20 (MMYKLGVLLIICLLLFPLTA) are cleaved as a signal peptide. Positions 21–53 (VPQDGDQPADRPAERMQDDISFEHDRFFDPVKR) are excised as a propeptide. Intrachain disulfides connect cysteine 54-cysteine 69, cysteine 55-cysteine 65, and cysteine 61-cysteine 68. Proline 67 carries the 4-hydroxyproline; partial; in major form modification. Cysteine 69 is modified (cysteine amide).

Belongs to the conotoxin M superfamily. Contains 3 disulfide bonds. In terms of tissue distribution, expressed by the venom duct.

The protein localises to the secreted. In terms of biological role, mu-conotoxins block voltage-gated sodium channels (Nav). This is Mu-conotoxin-like Am3.4 from Conus amadis (Amadis cone).